The chain runs to 489 residues: FAD-linked oxidoreductase tazG (489 aa).

The signal sequence occupies residues 1 to 17 (MVAFSAILQTALGLSAA). N-linked (GlcNAc...) asparagine glycosylation is present at asparagine 38. The FAD-binding PCMH-type domain maps to 55 to 224 (APSYGAGAIK…TSATYRLPEV (170 aa)). N-linked (GlcNAc...) asparagine glycosylation is found at asparagine 242 and asparagine 306.

It belongs to the oxygen-dependent FAD-linked oxidoreductase family. FAD serves as cofactor.

Its pathway is secondary metabolite biosynthesis. In terms of biological role, FAD-linked oxidoreductase; part of the gene cluster that mediates the biosynthesis of azaterrilone A and other azaphilones, a class of fungal metabolites characterized by a highly oxygenated pyrano-quinone bicyclic core and exhibiting a broad range of bioactivities. The first step of the pathway begins with the non-reducing polyketide synthase tazA that assembles one acetyl-CoA starter unit, five malonyl-CoA units, and catalyzes a series of Claisen condensations, methylation, PT-mediated cyclization, and finally releases the first hexaketide precursor through the R-domain. The tazA product then undergoes reduction on its terminal ketone and the following pyran-ring formation by yet undetermined enzyme(s). Dehydration and enoyl reduction, possibly involving the trans-enoyl reductase tazE leads to the next intermediate. TazD is predicted as an acetyltransferase and might catalyze the acetylation steps leading to the synthesis of azaterrilone A. Azaterrilone A is not the final product of the taz pathway and both the highly reducing polyketide synthase tazB and the dual enzyme tazHJ catalyze late steps of the pathway, leading to the production of the 2 final stereoisomers that contain additional polyketide modification whose structures have still to be determined. The protein is FAD-linked oxidoreductase tazG of Aspergillus terreus (strain NIH 2624 / FGSC A1156).